We begin with the raw amino-acid sequence, 136 residues long: Outer envelope pore protein 16-4, chloroplastic (136 aa).

A contains 4 beta strands region spans residues 1-59 (MEEELLSAVPCSSLTVESVLRVATAGGLYGLCAGPRDARKIGLSGVSQASFVAKSIGRF). 4 helical membrane-spanning segments follow: residues 18–34 (SVLR…LCAG), 56–72 (IGRF…VFTM), 86–102 (WVNA…AVAI), and 110–126 (VVGM…LANC).

Belongs to the Tim17/Tim22/Tim23 family. Plastid outer envelope porin OEP16 (TC 1.B.30) subfamily. Homodimer and oligomers in membrane.

Its subcellular location is the plastid. The protein resides in the chloroplast outer membrane. Functionally, voltage-dependent high-conductance channel with a slight cation-selectivity; selective for amino acids but excludes triosephosphates or uncharged sugars. Non-essential amino acid-selective channel protein and translocation pore for NADPH:protochlorophyllide oxidoreductase A (PORA) and possibly PORB. The protein is Outer envelope pore protein 16-4, chloroplastic (OEP164) of Arabidopsis thaliana (Mouse-ear cress).